We begin with the raw amino-acid sequence, 420 residues long: D-tagatose-1,6-bisphosphate aldolase subunit GatZ (420 aa).

It belongs to the GatZ/KbaZ family. GatZ subfamily. Forms a complex with GatY.

It functions in the pathway carbohydrate metabolism; D-tagatose 6-phosphate degradation; D-glyceraldehyde 3-phosphate and glycerone phosphate from D-tagatose 6-phosphate: step 2/2. Its function is as follows. Component of the tagatose-1,6-bisphosphate aldolase GatYZ that is required for full activity and stability of the Y subunit. Could have a chaperone-like function for the proper and stable folding of GatY. When expressed alone, GatZ does not show any aldolase activity. Is involved in the catabolism of galactitol. This is D-tagatose-1,6-bisphosphate aldolase subunit GatZ from Escherichia coli O7:K1 (strain IAI39 / ExPEC).